Reading from the N-terminus, the 338-residue chain is Methionine import ATP-binding protein MetN 1 (338 aa).

The 240-residue stretch at 2 to 241 folds into the ABC transporter domain; sequence IELHQVSKSF…AKHATTKRFV (240 aa). Residue 38 to 45 participates in ATP binding; sequence GYSGAGKS.

It belongs to the ABC transporter superfamily. Methionine importer (TC 3.A.1.24) family. As to quaternary structure, the complex is composed of two ATP-binding proteins (MetN), two transmembrane proteins (MetI) and a solute-binding protein (MetQ).

The protein resides in the cell membrane. It carries out the reaction L-methionine(out) + ATP + H2O = L-methionine(in) + ADP + phosphate + H(+). The enzyme catalyses D-methionine(out) + ATP + H2O = D-methionine(in) + ADP + phosphate + H(+). Functionally, part of the ABC transporter complex MetNIQ involved in methionine import. Responsible for energy coupling to the transport system. In Listeria monocytogenes serotype 4b (strain F2365), this protein is Methionine import ATP-binding protein MetN 1.